Consider the following 472-residue polypeptide: 3-isopropylmalate dehydratase large subunit (472 aa).

3 residues coordinate [4Fe-4S] cluster: Cys-347, Cys-407, and Cys-410.

Belongs to the aconitase/IPM isomerase family. LeuC type 1 subfamily. In terms of assembly, heterodimer of LeuC and LeuD. [4Fe-4S] cluster is required as a cofactor.

The enzyme catalyses (2R,3S)-3-isopropylmalate = (2S)-2-isopropylmalate. The protein operates within amino-acid biosynthesis; L-leucine biosynthesis; L-leucine from 3-methyl-2-oxobutanoate: step 2/4. Its function is as follows. Catalyzes the isomerization between 2-isopropylmalate and 3-isopropylmalate, via the formation of 2-isopropylmaleate. This Bacillus velezensis (strain DSM 23117 / BGSC 10A6 / LMG 26770 / FZB42) (Bacillus amyloliquefaciens subsp. plantarum) protein is 3-isopropylmalate dehydratase large subunit.